We begin with the raw amino-acid sequence, 732 residues long: DNA gyrase subunit B, mitochondrial (732 aa).

Positions 513–620 (SEIFIVEGDS…RYQRALFDAG (108 aa)) constitute a Toprim domain. Mg(2+) contacts are provided by E519, D593, and D595.

The protein belongs to the type II topoisomerase GyrB family. Made up of two chains. The A chain is responsible for DNA breakage and rejoining; the B chain catalyzes ATP hydrolysis. The cofactor is Mg(2+). Requires Mn(2+) as cofactor. Ca(2+) serves as cofactor.

The protein localises to the mitochondrion. It catalyses the reaction ATP-dependent breakage, passage and rejoining of double-stranded DNA.. Its function is as follows. A type II topoisomerase that negatively supercoils closed circular double-stranded DNA in an ATP-dependent manner. The chain is DNA gyrase subunit B, mitochondrial (GYRBM) from Arabidopsis thaliana (Mouse-ear cress).